A 279-amino-acid polypeptide reads, in one-letter code: Ribosomal RNA small subunit methyltransferase J (279 aa).

S-adenosyl-L-methionine is bound by residues 138–139 (ER) and Asp-194.

This sequence belongs to the methyltransferase superfamily. RsmJ family.

Its subcellular location is the cytoplasm. It carries out the reaction guanosine(1516) in 16S rRNA + S-adenosyl-L-methionine = N(2)-methylguanosine(1516) in 16S rRNA + S-adenosyl-L-homocysteine + H(+). In terms of biological role, specifically methylates the guanosine in position 1516 of 16S rRNA. This is Ribosomal RNA small subunit methyltransferase J from Acinetobacter baumannii (strain AYE).